The chain runs to 317 residues: Melanocyte-stimulating hormone receptor (317 aa).

At 1–37 (MAVQGFQRRLLGSLNSTPTAIPQLGLAANQTGARCLE) the chain is on the extracellular side. Asn29 carries an N-linked (GlcNAc...) asparagine glycan. The helical transmembrane segment at 38-63 (VSIPDGLFLSLGLVSLVENVLVVATI) threads the bilayer. Topologically, residues 64–72 (AKNRNLHSP) are cytoplasmic. Residues 73–93 (TYCFICCLALSDLLVSGGNVL) traverse the membrane as a helical segment. The Extracellular segment spans residues 94-118 (ETVVILLLEASALAARAAVVQPLDN). Residues 119–140 (VIDVITCSSMVSSLCFLGAIAV) traverse the membrane as a helical segment. Residues 141-163 (DRYVSIFYALRYHSIVTLPRARQ) are Cytoplasmic-facing. Residues 164 to 183 (AIAAIWVASVLFSTLFIAYY) traverse the membrane as a helical segment. Residues 184–191 (DHAAVLLC) are Extracellular-facing. A helical transmembrane segment spans residues 192 to 211 (LVVFFLAMLVXMAVLYVHML). The Cytoplasmic portion of the chain corresponds to 212–240 (ARACQHAQGIARLHKRQRPLHQGFGLKGA). A helical transmembrane segment spans residues 241–266 (VTLTILLGIFFLCWGPFFLHLTLIVL). The Extracellular portion of the chain corresponds to 267–279 (CPQHPTCSCIFKN). A helical membrane pass occupies residues 280–300 (FNLFLTLIICNAIIDPLIYAF). Topologically, residues 301-317 (RRQELRRTLKEGLTCSW) are cytoplasmic. The S-palmitoyl cysteine moiety is linked to residue Cys315.

The protein belongs to the G-protein coupled receptor 1 family. As to quaternary structure, interacts with MGRN1, but does not undergo MGRN1-mediated ubiquitination; this interaction competes with GNAS-binding and thus inhibits agonist-induced cAMP production. Interacts with OPN3; the interaction results in a decrease in MC1R-mediated cAMP signaling and ultimately a decrease in melanin production in melanocytes.

It is found in the cell membrane. In terms of biological role, receptor for MSH (alpha, beta and gamma) and ACTH. The activity of this receptor is mediated by G proteins which activate adenylate cyclase. Mediates melanogenesis, the production of eumelanin (black/brown) and phaeomelanin (red/yellow), via regulation of cAMP signaling in melanocytes. The sequence is that of Melanocyte-stimulating hormone receptor (MC1R) from Hylobates muelleri (Mueller's Bornean gibbon).